We begin with the raw amino-acid sequence, 429 residues long: Tyrosine--tRNA ligase (429 aa).

Tyr-36 is an L-tyrosine binding site. The 'HIGH' region signature appears at 41–50; sequence PTAASLHAGH. 2 residues coordinate L-tyrosine: Tyr-171 and Gln-175. The 'KMSKS' region motif lies at 231–235; the sequence is KFGKS. Residue Lys-234 coordinates ATP. One can recognise an S4 RNA-binding domain in the interval 360–417; sequence ATIVDLLVATGLAESRGAARRTVNEGGAAVNNQKIADPDWTPADGDYLHGRWLVVRRG.

This sequence belongs to the class-I aminoacyl-tRNA synthetase family. TyrS type 1 subfamily. Homodimer.

The protein resides in the cytoplasm. The catalysed reaction is tRNA(Tyr) + L-tyrosine + ATP = L-tyrosyl-tRNA(Tyr) + AMP + diphosphate + H(+). Functionally, catalyzes the attachment of tyrosine to tRNA(Tyr) in a two-step reaction: tyrosine is first activated by ATP to form Tyr-AMP and then transferred to the acceptor end of tRNA(Tyr). The protein is Tyrosine--tRNA ligase of Nocardia farcinica (strain IFM 10152).